The sequence spans 194 residues: uncharacterized protein (194 aa).

An N-terminal signal peptide occupies residues 1-20; that stretch reads MLYKFTVLLLIYSYLRNLQA. N-linked (GlcNAc...) asparagine; by host glycosylation is found at Asn-31, Asn-72, Asn-133, and Asn-157.

This is an uncharacterized protein from Ostreid herpesvirus 1 (isolate France) (OsHV-1).